The following is a 69-amino-acid chain: MRFLNIFLFFAVMIAFVSASPVLEEEEIDIEPRITCDLIGNERLCVVHCLAKGFRGGWCDSRKVCNCRR.

The first 19 residues, 1-19, serve as a signal peptide directing secretion; sequence MRFLNIFLFFAVMIAFVSA. A propeptide spanning residues 20 to 33 is cleaved from the precursor; it reads SPVLEEEEIDIEPR. 3 disulfides stabilise this stretch: cysteine 36/cysteine 59, cysteine 45/cysteine 65, and cysteine 49/cysteine 67.

Belongs to the asilidin-12 family. Expressed by the venom gland.

Its subcellular location is the secreted. In terms of biological role, the recombinant peptide moderately increases Kv11.1/KCNH2/ERG1 currents and shifts the voltage-dependence of the channel activation to hyperpolarised potentials. In vivo, induces neurotoxic effects when injected into insects (tested on L.cuprina and A.domesticus). This is U-Asilidin(12)-Dg3b from Dolopus genitalis (Giant Australian assassin fly).